The sequence spans 93 residues: Large ribosomal subunit protein uL23cz/uL23cy (93 aa).

The protein belongs to the universal ribosomal protein uL23 family. In terms of assembly, part of the 50S ribosomal subunit.

The protein localises to the plastid. It localises to the chloroplast. Binds to 23S rRNA. In Atropa belladonna (Belladonna), this protein is Large ribosomal subunit protein uL23cz/uL23cy (rpl23-A).